The primary structure comprises 204 residues: UPF0637 protein lwe1043 (204 aa).

It belongs to the UPF0637 family.

This Listeria welshimeri serovar 6b (strain ATCC 35897 / DSM 20650 / CCUG 15529 / CIP 8149 / NCTC 11857 / SLCC 5334 / V8) protein is UPF0637 protein lwe1043.